Reading from the N-terminus, the 635-residue chain is Bifunctional lysine-specific demethylase and histidyl-hydroxylase NO66 (635 aa).

2 disordered regions span residues 1-115 and 141-190; these read MSAV…LQNS and FNGE…KANG. Over residues 84 to 99 the composition is skewed to low complexity; it reads ASASDINTSASKNVNA. Residues 141-156 show a composition bias toward polar residues; that stretch reads FNGESLKNNSNHSTPV. One can recognise a JmjC domain in the interval 295–440; the sequence is CSIRMLNPQT…DLLELFFPHA (146 aa). H341, D343, and H406 together coordinate Fe cation.

This sequence belongs to the ROX family. NO66 subfamily. Requires Fe(2+) as cofactor.

Its subcellular location is the nucleus. The catalysed reaction is N(6),N(6)-dimethyl-L-lysyl(36)-[histone H3] + 2 2-oxoglutarate + 2 O2 = L-lysyl(36)-[histone H3] + 2 formaldehyde + 2 succinate + 2 CO2. Oxygenase that can act as both a histone lysine demethylase and a ribosomal histidine hydroxylase. Specifically demethylates 'Lys-4' (H3K4me) and 'Lys-36' (H3K36me) of histone H3, thereby playing a central role in histone code. The polypeptide is Bifunctional lysine-specific demethylase and histidyl-hydroxylase NO66 (Aedes aegypti (Yellowfever mosquito)).